The sequence spans 458 residues: Argininosuccinate lyase (458 aa).

The protein belongs to the lyase 1 family. Argininosuccinate lyase subfamily.

The protein localises to the cytoplasm. The enzyme catalyses 2-(N(omega)-L-arginino)succinate = fumarate + L-arginine. It functions in the pathway amino-acid biosynthesis; L-arginine biosynthesis; L-arginine from L-ornithine and carbamoyl phosphate: step 3/3. This is Argininosuccinate lyase from Pelobacter propionicus (strain DSM 2379 / NBRC 103807 / OttBd1).